Consider the following 179-residue polypeptide: Ubiquitin-conjugating enzyme E2 C (179 aa).

Residues 1 to 31 (MASQNRDPVAASVAAARKGAEPSGGAARGPV) form a disordered region. A2 carries the post-translational modification N-acetylalanine. A Phosphoserine modification is found at S3. The 146-residue stretch at 30-175 (PVGKRLQQEL…LQETYSKQVS (146 aa)) folds into the UBC core domain. The Glycyl thioester intermediate role is filled by C114.

This sequence belongs to the ubiquitin-conjugating enzyme family. As to quaternary structure, component of the APC/C complex, composed of at least 14 distinct subunits that assemble into a complex of at least 19 chains with a combined molecular mass of around 1.2 MDa. Within this complex, directly interacts with ANAPC2. In terms of processing, autoubiquitinated by the APC/C complex, leading to its degradation by the proteasome. Its degradation plays a central role in APC/C regulation, allowing cyclin-A accumulation before S phase entry. APC/C substrates inhibit the autoubiquitination of UBE2C/UBCH10 but not its E2 function, hence APC/C remaining active until its substrates have been destroyed.

It carries out the reaction S-ubiquitinyl-[E1 ubiquitin-activating enzyme]-L-cysteine + [E2 ubiquitin-conjugating enzyme]-L-cysteine = [E1 ubiquitin-activating enzyme]-L-cysteine + S-ubiquitinyl-[E2 ubiquitin-conjugating enzyme]-L-cysteine.. It catalyses the reaction S-ubiquitinyl-[E1 ubiquitin-activating enzyme]-L-cysteine + [acceptor protein]-L-lysine = [E1 ubiquitin-activating enzyme]-L-cysteine + N(6)-monoubiquitinyl-[acceptor protein]-L-lysine.. Its pathway is protein modification; protein ubiquitination. Functionally, accepts ubiquitin from the E1 complex and catalyzes its covalent attachment to other proteins. In vitro catalyzes 'Lys-11'- and 'Lys-48'-linked polyubiquitination. Acts as an essential factor of the anaphase promoting complex/cyclosome (APC/C), a cell cycle-regulated ubiquitin ligase that controls progression through mitosis. Acts by initiating 'Lys-11'-linked polyubiquitin chains on APC/C substrates, leading to the degradation of APC/C substrates by the proteasome and promoting mitotic exit. In Bos taurus (Bovine), this protein is Ubiquitin-conjugating enzyme E2 C (UBE2C).